Consider the following 633-residue polypeptide: General amino acid permease AGP1 (633 aa).

Over 1–124 (MSSSKSLYEL…SLKKTIQPRH (124 aa)) the chain is Cytoplasmic. A Phosphoserine modification is found at Ser-6. Lys-11 is covalently cross-linked (Glycyl lysine isopeptide (Lys-Gly) (interchain with G-Cter in ubiquitin)). 2 disordered regions span residues 32–52 (FETG…EQHN) and 86–116 (ISPS…SDSL). Positions 34 to 52 (TGSNDRPSSQPHLGYEQHN) are enriched in polar residues. Residues 125–145 (VLMIALGTGIGTGLLVGNGTA) traverse the membrane as a helical segment. Over 146 to 148 (LVH) the chain is Extracellular. Residues 149–169 (AGPAGLLIGYAIMGSILYCII) form a helical membrane-spanning segment. Topologically, residues 170 to 197 (QACGEMALVYSNLTGGYNAYPSFLVDDG) are cytoplasmic. Residues 198–218 (FGFAVAWVYCLQWLCVCPLEL) form a helical membrane-spanning segment. The Extracellular segment spans residues 219–231 (VTASMTIKYWTTS). A helical membrane pass occupies residues 232–252 (VNPDVFVIIFYVLVITINIFG). Residues 253-260 (ARGYAEAE) lie on the Cytoplasmic side of the membrane. The helical transmembrane segment at 261 to 281 (FFFNCCKILMMTGFFILGIII) threads the bilayer. The Extracellular portion of the chain corresponds to 282–313 (DVGGAGNDGFIGGKYWHDPGAFNGKHAIDRFK). Residues 314–334 (GVAATLVTAAFAFGGSEFIAI) traverse the membrane as a helical segment. Topologically, residues 335–352 (TTAEQSNPRKAIPGAAKQ) are cytoplasmic. A helical transmembrane segment spans residues 353-373 (MIYRILFLFLATIILLGFLVP). The Extracellular segment spans residues 374-402 (YNSDQLLGSTGGGTKASPYVIAVASHGVR). The chain crosses the membrane as a helical span at residues 403-425 (VVPHFINAVILLSVLSMANSSFY). The Cytoplasmic portion of the chain corresponds to 426 to 452 (SSARLFLTLSEQGYAPKVFSYIDRAGR). A helical membrane pass occupies residues 453 to 473 (PLIAMGVSALFAVIAFCAASP). At 474 to 477 (KEEQ) the chain is on the extracellular side. The chain crosses the membrane as a helical span at residues 478–498 (VFTWLLAISGLSQLFTWTAIC). Over 499-531 (LSHLRFRRAMKVQGRSLGELGFKSQTGVWGSAY) the chain is Cytoplasmic. The helical transmembrane segment at 532–552 (ACIMMILILIAQFWVAIAPIG) threads the bilayer. The Extracellular segment spans residues 553-560 (EGKLDAQA). The chain crosses the membrane as a helical span at residues 561–581 (FFENYLAMPILIALYVGYKVW). The Cytoplasmic portion of the chain corresponds to 582–633 (HKDWKLFIRADKIDLDSHRQIFDEELIKQEDEEYRERLRNGPYWKRVVAFWC). Cys-633 carries S-palmitoyl cysteine lipidation.

Belongs to the amino acid-polyamine-organocation (APC) superfamily. YAT (TC 2.A.3.10) family. Palmitoylated by PFA4.

Its subcellular location is the cell membrane. Broad substrate range permease which transports asparagine and glutamine with intermediate specificity. Also transports Ala, Cys, Gly, Ile, Leu, Met, Phe, Ser, Thr, Tyr and Val. Important for the utilization of amino acids as a nitrogen source. The polypeptide is General amino acid permease AGP1 (AGP1) (Saccharomyces cerevisiae (strain ATCC 204508 / S288c) (Baker's yeast)).